The chain runs to 112 residues: Protein ORF3 (112 aa).

Hydrophobic stretches follow at residues 7-23 (ALGLFCFCSSCFCLCCP) and 40-60 (AAVVSGVTGLILSPSPSPIFI). Positions 28–66 (VSRLAVAAGKRGAAVVSGVTGLILSPSPSPIFIQPTPSH) are interaction with host HPX. Residues 70 to 112 (QPPPGLELALGSQSVHSAPLGVTSPSAPPLPPVVDLPQLGLRR) form a homodimerization, and interaction with host AMBP/bikunin region. Residues 89–112 (LGVTSPSAPPLPPVVDLPQLGLRR) form a disordered region. Positions 93–102 (SPSAPPLPPV) are interaction with host SRC, HCK, FYN, PIK3R3 and GRB2. Residues 94-97 (PSAP) carry the PTAP/PSAP motif motif.

Belongs to the hepevirus ORF3 protein family. Forms homooligomers. Interacts with host SRC, HCK, FYN, PIK3R3 and GRB2 (via SH3 domain); binding does not activate the kinases. Interacts with host AMBP/bikunin and AMBP/alpha-1-microglobulin peptides. Interacts with host HPX/hemopexin. Interacts (when phosphorylated) with capsid protein ORF2. Interacts with host TSG101; this interaction plays a role in viral release from the host cell. Interacts with host SIRPA; this interaction down-regulates the phosphorylation of host IRF3. In terms of processing, palmitoylated in the N-terminus.

It localises to the host endoplasmic reticulum membrane. It is found in the host cytoplasm. The protein localises to the host cytoskeleton. Its subcellular location is the virion. The protein resides in the host cell membrane. Small multifunctional phosphoprotein involved in virion morphogenesis, egress and counteracting host innate immunity. Plays critical roles in the final steps of viral release by interacting with host TSG101, a member of the vacuolar protein-sorting pathway and using other cellular host proteins involved in vesicle formation pathway. Also acts as a viroporin and forms ion conductive pores allowing viral particle release. Impairs the generation of type I interferon by down-regulating host TLR3 and TLR7 as well as their downstream signaling pathways. Down-regulates the phosphorylation of host IRF3 via the interaction with host SIRP-alpha, thereby inhibiting IFN-I expression. Interacts with host microtubules. The polypeptide is Protein ORF3 (Bandicota bengalensis (lesser bandicoot rat)).